We begin with the raw amino-acid sequence, 177 residues long: Crossover junction endodeoxyribonuclease RuvC (177 aa).

Active-site residues include D8, E72, and D144. D8, E72, and D144 together coordinate Mg(2+).

It belongs to the RuvC family. As to quaternary structure, homodimer which binds Holliday junction (HJ) DNA. The HJ becomes 2-fold symmetrical on binding to RuvC with unstacked arms; it has a different conformation from HJ DNA in complex with RuvA. In the full resolvosome a probable DNA-RuvA(4)-RuvB(12)-RuvC(2) complex forms which resolves the HJ. The cofactor is Mg(2+).

The protein resides in the cytoplasm. The catalysed reaction is Endonucleolytic cleavage at a junction such as a reciprocal single-stranded crossover between two homologous DNA duplexes (Holliday junction).. Its function is as follows. The RuvA-RuvB-RuvC complex processes Holliday junction (HJ) DNA during genetic recombination and DNA repair. Endonuclease that resolves HJ intermediates. Cleaves cruciform DNA by making single-stranded nicks across the HJ at symmetrical positions within the homologous arms, yielding a 5'-phosphate and a 3'-hydroxyl group; requires a central core of homology in the junction. The consensus cleavage sequence is 5'-(A/T)TT(C/G)-3'. Cleavage occurs on the 3'-side of the TT dinucleotide at the point of strand exchange. HJ branch migration catalyzed by RuvA-RuvB allows RuvC to scan DNA until it finds its consensus sequence, where it cleaves and resolves the cruciform DNA. The polypeptide is Crossover junction endodeoxyribonuclease RuvC (Teredinibacter turnerae (strain ATCC 39867 / T7901)).